The following is a 134-amino-acid chain: Small ribosomal subunit protein uS9 (134 aa).

A disordered region spans residues 109 to 134 (DARRTEPHKPSKSSKGPRAKRQKSYR). Positions 118–134 (PSKSSKGPRAKRQKSYR) are enriched in basic residues.

Belongs to the universal ribosomal protein uS9 family.

The protein is Small ribosomal subunit protein uS9 of Methanococcus maripaludis (strain C7 / ATCC BAA-1331).